Reading from the N-terminus, the 944-residue chain is Putative alpha,alpha-trehalose-phosphate synthase [UDP-forming] 106 kDa subunit (944 aa).

A compositionally biased stretch (polar residues) spans 73–84 (TNAQSNIATPSP). Disordered regions lie at residues 73 to 113 (TNAQ…NSLS) and 129 to 166 (SKND…SELE). Positions 101-113 (PSSDSPSLENSLS) are enriched in low complexity. Phosphoserine is present on residues Ser-141, Ser-145, Ser-149, Ser-150, Ser-163, and Ser-177. The tract at residues 173-652 (SRSLSFSMNG…AVTFQSLIKE (480 aa)) is glycosyltransferase. Thr-189 bears the Phosphothreonine mark.

The protein in the N-terminal section; belongs to the glycosyltransferase 20 family.

It carries out the reaction D-glucose 6-phosphate + UDP-alpha-D-glucose = alpha,alpha-trehalose 6-phosphate + UDP + H(+). The polypeptide is Putative alpha,alpha-trehalose-phosphate synthase [UDP-forming] 106 kDa subunit (Schizosaccharomyces pombe (strain 972 / ATCC 24843) (Fission yeast)).